The following is an 809-amino-acid chain: Penicillin-binding protein 1A (809 aa).

The Cytoplasmic segment spans residues 1-34; it reads MSDNTKTNSRNKSVKRTKKVKKKKKFGFFKKLFT. Residues 35-55 form a helical; Signal-anchor for type II membrane protein membrane-spanning segment; it reads ILFCLFILLSVAASGVIFAIV. The Extracellular portion of the chain corresponds to 56-809; it reads KTSPNLDING…PNNNTTNTNK (754 aa). The tract at residues 74-251 is transglycosylase; sequence SQLYDDNNNP…PSAYYPFSQN (178 aa). The active-site Proton donor; for transglycosylase activity is glutamate 113. The transpeptidase stretch occupies residues 381 to 664; sequence AAATLFDYHT…VAEIWGEIMK (284 aa). Serine 422 serves as the catalytic Acyl-ester intermediate; for transpeptidase activity. The disordered stretch occupies residues 694 to 809; the sequence is SPSNLSGDDS…PNNNTTNTNK (116 aa).

In the N-terminal section; belongs to the glycosyltransferase 51 family. It in the C-terminal section; belongs to the transpeptidase family.

It localises to the cell membrane. The catalysed reaction is [GlcNAc-(1-&gt;4)-Mur2Ac(oyl-L-Ala-gamma-D-Glu-L-Lys-D-Ala-D-Ala)](n)-di-trans,octa-cis-undecaprenyl diphosphate + beta-D-GlcNAc-(1-&gt;4)-Mur2Ac(oyl-L-Ala-gamma-D-Glu-L-Lys-D-Ala-D-Ala)-di-trans,octa-cis-undecaprenyl diphosphate = [GlcNAc-(1-&gt;4)-Mur2Ac(oyl-L-Ala-gamma-D-Glu-L-Lys-D-Ala-D-Ala)](n+1)-di-trans,octa-cis-undecaprenyl diphosphate + di-trans,octa-cis-undecaprenyl diphosphate + H(+). The enzyme catalyses Preferential cleavage: (Ac)2-L-Lys-D-Ala-|-D-Ala. Also transpeptidation of peptidyl-alanyl moieties that are N-acyl substituents of D-alanine.. It participates in cell wall biogenesis; peptidoglycan biosynthesis. In terms of biological role, cell wall formation. Synthesis of cross-linked peptidoglycan from the lipid intermediates. The enzyme has a penicillin-insensitive transglycosylase N-terminal domain (formation of linear glycan strands) and a penicillin-sensitive transpeptidase C-terminal domain (cross-linking of the peptide subunits). This is Penicillin-binding protein 1A (pbpA) from Clostridium acetobutylicum (strain ATCC 824 / DSM 792 / JCM 1419 / IAM 19013 / LMG 5710 / NBRC 13948 / NRRL B-527 / VKM B-1787 / 2291 / W).